The primary structure comprises 209 residues: Protein Bel-1 (209 aa).

3 disordered regions span residues 1 to 30 (MASK…LDLT), 123 to 143 (FLNS…PATS), and 156 to 185 (CSRP…GESG). 2 stretches are compositionally biased toward polar residues: residues 21–30 (SHSTSGLDLT) and 132–143 (TPKTDPTRPATS).

Its function is as follows. Transcriptional transactivator that activates the viral internal promoter (IP), thereby enhancing its own expression. This transactivation is repressed by nuclear factor I. Also transactivates the long terminal repeat (LTR) promoter, thereby inducing structural gene expression, initiating the late phase of infection. It is therefore a key regulator of viral gene expression. It directly binds to and activates DNA target sites of viral promoters and those of distinct cellular genes. Required for viral replication. The chain is Protein Bel-1 (bel1) from Felis catus (Cat).